The following is a 190-amino-acid chain: Small ribosomal subunit protein eS7x (190 aa).

M1 bears the N-acetylmethionine mark. Residues T17–V50 adopt a coiled-coil conformation.

Belongs to the eukaryotic ribosomal protein eS7 family.

The chain is Small ribosomal subunit protein eS7x (RPS7C) from Arabidopsis thaliana (Mouse-ear cress).